The following is a 202-amino-acid chain: Protein phosphatase inhibitor 2 family member C (202 aa).

Disordered regions lie at residues 1-51 and 71-118; these read MSAS…DESS and PGTS…EQES. The tract at residues 12 to 17 is required for binding PPP1CC; the sequence is KGILKN. Low complexity predominate over residues 19-35; the sequence is SSSGSSVATSGQQSGGT. The required for binding PPP1CC stretch occupies residues 43–55; that stretch reads KSQKWDESSILAA. Over residues 71-80 the composition is skewed to polar residues; it reads PGTSYMSVQD. Basic and acidic residues predominate over residues 84 to 112; it reads DSVRDVEGEDSVRGVEGKEATDASDHSCE. The required for binding PPP1CC catalytic center, displacing metal ions and inhibition of PPP1CC catalytic activity stretch occupies residues 144-147; that stretch reads HYNE. The segment at 162–202 is disordered; sequence LQSEDNENEETPQGTNEEKTAAEESEEAPLTGGLQTQSCDP.

It belongs to the protein phosphatase inhibitor 2 family. Detected in sperm (at protein level).

Functionally, functions as a protein phosphatase inhibitor. It inhibits activity of the catalytic subunit of PP1 and weakly inhibits the activity of myosin-associated phosphates. This is Protein phosphatase inhibitor 2 family member C from Homo sapiens (Human).